The following is a 460-amino-acid chain: Argininosuccinate lyase (460 aa).

This sequence belongs to the lyase 1 family. Argininosuccinate lyase subfamily.

It localises to the cytoplasm. The enzyme catalyses 2-(N(omega)-L-arginino)succinate = fumarate + L-arginine. Its pathway is amino-acid biosynthesis; L-arginine biosynthesis; L-arginine from L-ornithine and carbamoyl phosphate: step 3/3. The chain is Argininosuccinate lyase from Buchnera aphidicola subsp. Cinara cedri (strain Cc).